The primary structure comprises 688 residues: MIIRFKINEIECEVNEEKEDITILQACTANGIEIPRFCYHEKLTIAGNCRMCLVYVTNEEKLLAACGIPLDENFDDESIETEIDEILKAREGVMEFLLINHPLDCPICDQGGECDLQEQTLAYGLDTGRFYIKKRAVEIKTFGRLIKGIMTRCIHCTRCVRFLTEIAGVNELGVLGRGYNMEIGTYKKNVMIESELSGNIIDLCPVGALTSAVYAYKGRPWELKNIKGIDIFDTLLTPINYQVKGGEIFRILPRINDRINEEWITDKVRFHYESYKIIEKIRKETPSYKIQANKFIELTWKTALKMVFKVLLNKKNKVDLIIGSKINSTNLRIYKELMNRLGSKNYITENGLMFKKFNYDLRENYINSNDLYNVDKNDLVLLCGINLRVESPLLNIKLRNVNFGDDEIESVKKIGIIGNKFDWKHESEYIGATLNSMLKLFEGRLPYCQQIKKSKAPLIIVGPSLLTRISLTLQEMRAIFMKACNLKPENILIITQGANFGMALEEGLFKEKFSIGGNVLYSIDSNEVQVTNKINYVIYQGIINDKFENKIDLYLPSKHYFEDFEGDREVYMNTFGQRSEIEKLSISKGNKIKENSMIGYIQLMYLNNKEMTRKEKEQKDIKLSYREMKKEEKRKIKVNKYLTINNIIENYYMTDINIRLSKNLMITGQLRKEKKIMEAGIWKNRKCI.

The 2Fe-2S ferredoxin-type domain occupies Met-1–Glu-85. Positions 38, 49, 52, and 66 each coordinate [2Fe-2S] cluster. In terms of domain architecture, 4Fe-4S His(Cys)3-ligated-type spans Glu-85–Gly-124. [4Fe-4S] cluster contacts are provided by His-101, Cys-105, Cys-108, Cys-114, Cys-153, Cys-156, Cys-159, and Cys-204. Residues Leu-223 to Glu-279 enclose the 4Fe-4S Mo/W bis-MGD-type domain.

Belongs to the complex I 75 kDa subunit family. In terms of assembly, complex I is composed of about 45 different subunits. The cofactor is [2Fe-2S] cluster. [4Fe-4S] cluster is required as a cofactor.

Its subcellular location is the mitochondrion inner membrane. The enzyme catalyses a ubiquinone + NADH + 5 H(+)(in) = a ubiquinol + NAD(+) + 4 H(+)(out). In terms of biological role, core subunit of the mitochondrial membrane respiratory chain NADH dehydrogenase (Complex I) that is believed to belong to the minimal assembly required for catalysis. Complex I functions in the transfer of electrons from NADH to the respiratory chain. The immediate electron acceptor for the enzyme is believed to be ubiquinone. This is the largest subunit of complex I and it is a component of the iron-sulfur (IP) fragment of the enzyme. It may form part of the active site crevice where NADH is oxidized. In Dictyostelium discoideum (Social amoeba), this protein is NADH-ubiquinone oxidoreductase 75 kDa subunit (nad11).